An 85-amino-acid chain; its full sequence is ATP synthase subunit c (85 aa).

The next 2 membrane-spanning stretches (helical) occupy residues Ile-10–Leu-30 and Phe-53–Phe-73.

The protein belongs to the ATPase C chain family. In terms of assembly, F-type ATPases have 2 components, F(1) - the catalytic core - and F(0) - the membrane proton channel. F(1) has five subunits: alpha(3), beta(3), gamma(1), delta(1), epsilon(1). F(0) has three main subunits: a(1), b(2) and c(10-14). The alpha and beta chains form an alternating ring which encloses part of the gamma chain. F(1) is attached to F(0) by a central stalk formed by the gamma and epsilon chains, while a peripheral stalk is formed by the delta and b chains.

It localises to the cell inner membrane. F(1)F(0) ATP synthase produces ATP from ADP in the presence of a proton or sodium gradient. F-type ATPases consist of two structural domains, F(1) containing the extramembraneous catalytic core and F(0) containing the membrane proton channel, linked together by a central stalk and a peripheral stalk. During catalysis, ATP synthesis in the catalytic domain of F(1) is coupled via a rotary mechanism of the central stalk subunits to proton translocation. In terms of biological role, key component of the F(0) channel; it plays a direct role in translocation across the membrane. A homomeric c-ring of between 10-14 subunits forms the central stalk rotor element with the F(1) delta and epsilon subunits. This Shewanella halifaxensis (strain HAW-EB4) protein is ATP synthase subunit c.